The following is a 545-amino-acid chain: Chaperonin GroEL (545 aa).

ATP-binding positions include 29-32 (TMGP), lysine 50, 86-90 (DGTTT), glycine 414, 477-479 (DAA), and aspartate 493.

Belongs to the chaperonin (HSP60) family. In terms of assembly, forms a cylinder of 14 subunits composed of two heptameric rings stacked back-to-back. Interacts with the co-chaperonin GroES.

Its subcellular location is the cytoplasm. The enzyme catalyses ATP + H2O + a folded polypeptide = ADP + phosphate + an unfolded polypeptide.. In terms of biological role, together with its co-chaperonin GroES, plays an essential role in assisting protein folding. The GroEL-GroES system forms a nano-cage that allows encapsulation of the non-native substrate proteins and provides a physical environment optimized to promote and accelerate protein folding. This is Chaperonin GroEL from Campylobacter jejuni subsp. jejuni serotype O:2 (strain ATCC 700819 / NCTC 11168).